The sequence spans 287 residues: Stomatin-like protein 3 (287 aa).

The residue at position 3 (Ser-3) is a Phosphoserine. Residues 25–45 form a helical; Signal-anchor for type III membrane protein membrane-spanning segment; the sequence is WILFFLSFLLMLVTFPISVWM. Over 46 to 287 the chain is Cytoplasmic; it reads CLKIIKEYER…GNNKKVTAKA (242 aa). A Phosphoserine modification is found at Ser-237.

Belongs to the band 7/mec-2 family. As to quaternary structure, homodimer. Interacts with PIEZO1 and PIEZO2. Expressed by all dorsal root ganglion neurons and is selectively expressed in neuronal tissues. Detected in olfactory epithelium.

It is found in the cell membrane. Functionally, required for the function of many mechanoreceptors. Modulate mechanotransduction channels and acid-sensing ion channels (ASIC) proteins. Potentiates PIEZO1 and PIEZO2 function by increasing their sensitivity to mechanical stimulations. This chain is Stomatin-like protein 3 (Stoml3), found in Mus musculus (Mouse).